The sequence spans 255 residues: Thiazole synthase (255 aa).

The active-site Schiff-base intermediate with DXP is the Lys-96. 1-deoxy-D-xylulose 5-phosphate contacts are provided by residues Gly-157, Ala-183–Gly-184, and Asn-205–Thr-206.

Belongs to the ThiG family. As to quaternary structure, homotetramer. Forms heterodimers with either ThiH or ThiS.

Its subcellular location is the cytoplasm. It catalyses the reaction [ThiS sulfur-carrier protein]-C-terminal-Gly-aminoethanethioate + 2-iminoacetate + 1-deoxy-D-xylulose 5-phosphate = [ThiS sulfur-carrier protein]-C-terminal Gly-Gly + 2-[(2R,5Z)-2-carboxy-4-methylthiazol-5(2H)-ylidene]ethyl phosphate + 2 H2O + H(+). The protein operates within cofactor biosynthesis; thiamine diphosphate biosynthesis. In terms of biological role, catalyzes the rearrangement of 1-deoxy-D-xylulose 5-phosphate (DXP) to produce the thiazole phosphate moiety of thiamine. Sulfur is provided by the thiocarboxylate moiety of the carrier protein ThiS. In vitro, sulfur can be provided by H(2)S. The chain is Thiazole synthase from Geobacillus thermodenitrificans (strain NG80-2).